A 165-amino-acid polypeptide reads, in one-letter code: Large ribosomal subunit protein uL10 (165 aa).

It belongs to the universal ribosomal protein uL10 family. In terms of assembly, part of the ribosomal stalk of the 50S ribosomal subunit. The N-terminus interacts with L11 and the large rRNA to form the base of the stalk. The C-terminus forms an elongated spine to which L12 dimers bind in a sequential fashion forming a multimeric L10(L12)X complex.

Forms part of the ribosomal stalk, playing a central role in the interaction of the ribosome with GTP-bound translation factors. This Buchnera aphidicola subsp. Schizaphis graminum (strain Sg) protein is Large ribosomal subunit protein uL10.